Reading from the N-terminus, the 152-residue chain is Transcriptional regulator MraZ (152 aa).

SpoVT-AbrB domains are found at residues 5–52 (ATLV…PLPE) and 81–124 (ASEC…DETT).

It belongs to the MraZ family. As to quaternary structure, forms oligomers.

It is found in the cytoplasm. The protein resides in the nucleoid. Its function is as follows. Negatively regulates its own expression and that of the subsequent genes in the proximal part of the division and cell wall (dcw) gene cluster. Acts by binding directly to DNA. May also regulate the expression of genes outside the dcw cluster. The chain is Transcriptional regulator MraZ from Klebsiella pneumoniae subsp. pneumoniae (strain ATCC 700721 / MGH 78578).